We begin with the raw amino-acid sequence, 266 residues long: MSTDRLQYVYAVTRPFDGVLPEGAHGIGGEPPRLLRHGDLVAVTGAVPAGDFDEAPLRARLEDLDWLADAARAHDAVISALSTVTCPLPLRLATVCRDDSGVRRLLEDGHDRFVRALERLDGRVEWGVKVYAEPGAAQQQEEEPAAHAREASGRDYLRRRLHARRSRDGDWQRADALCRRLHTELSRCAEAGTVHRPQDARLSGVPGVNVLNAAYLVDRARSQQFVELVDGASEPGVRVELTGPWAPYSFAGIAEEDVHETQEAGR.

The protein belongs to the gas vesicle GvpF/GvpL family.

Its subcellular location is the gas vesicle. Its function is as follows. Might be involved in nucleating gas vesicle formation. A minor component of the gas vesicle. Gas vesicles are hollow, gas filled proteinaceous nanostructures found in some microorganisms. It is not clear what function gas vesicles perform in soil bacteria. The sequence is that of Gas vesicle protein L from Streptomyces sp. (strain CB03234).